Here is a 436-residue protein sequence, read N- to C-terminus: Aminotransferase tdiD (436 aa).

4 residues coordinate substrate: Arg-30, Tyr-86, Tyr-148, and Asn-202. The residue at position 270 (Lys-270) is an N6-(pyridoxal phosphate)lysine. Arg-407 lines the substrate pocket.

The protein belongs to the class-I pyridoxal-phosphate-dependent aminotransferase family. Pyridoxal 5'-phosphate is required as a cofactor.

The catalysed reaction is 3-phenylpyruvate + L-tryptophan = indole-3-pyruvate + L-phenylalanine. It participates in secondary metabolite biosynthesis. Its function is as follows. Aminotransferase; part of the gene cluster that mediates the biosynthesis of terrequinone A, an antitumor agent. The first step in the biosynthetic pathway for terrequinone A is formation of indole pyruvic acid (IPA) from L-tryptophan by the aminotransferase tdiD. The nonribosomal peptide synthase tdiA then immediately converts unstable IPA to didemethylasterriquinone D (DDAQ D), via condensation of 2 IPA molecules. The symmetric connectivity of the 2 IPA molecules is thought to arise by head-to-tail dual Claisen condensations facilitated by the TE domain. TdiB then catalyzes reverse prenylation by transferring dimethylallyl diphosphate to carbon atom 2' of DDAQ D, to yield asterriquinone C-1. Finally, tdiC and tdiE enzymes robustly convert asterriquinone C-1 to terrequinone A via a transformation involving regular prenylation at carbon atom 5, which requires elimination of the hydroxy group on C-5. This is Aminotransferase tdiD from Emericella nidulans (strain FGSC A4 / ATCC 38163 / CBS 112.46 / NRRL 194 / M139) (Aspergillus nidulans).